Reading from the N-terminus, the 327-residue chain is Acetaldehyde dehydrogenase 5 (327 aa).

15-18 contributes to the NAD(+) binding site; that stretch reads SGNI. Cys133 acts as the Acyl-thioester intermediate in catalysis. Residues 164-172 and Asn297 each bind NAD(+); that span reads SAGPGTRAN.

Belongs to the acetaldehyde dehydrogenase family.

The catalysed reaction is acetaldehyde + NAD(+) + CoA = acetyl-CoA + NADH + H(+). The protein is Acetaldehyde dehydrogenase 5 of Rhodococcus jostii (strain RHA1).